The chain runs to 270 residues: Diaminopimelate epimerase (270 aa).

Substrate is bound by residues asparagine 15, glutamine 49, and asparagine 66. The active-site Proton donor is the cysteine 75. Substrate contacts are provided by residues 76–77 (GN), asparagine 155, asparagine 187, and 204–205 (ER). The Proton acceptor role is filled by cysteine 213. 214-215 (GS) lines the substrate pocket.

Belongs to the diaminopimelate epimerase family. Homodimer.

It localises to the cytoplasm. It carries out the reaction (2S,6S)-2,6-diaminopimelate = meso-2,6-diaminopimelate. It participates in amino-acid biosynthesis; L-lysine biosynthesis via DAP pathway; DL-2,6-diaminopimelate from LL-2,6-diaminopimelate: step 1/1. In terms of biological role, catalyzes the stereoinversion of LL-2,6-diaminopimelate (L,L-DAP) to meso-diaminopimelate (meso-DAP), a precursor of L-lysine and an essential component of the bacterial peptidoglycan. The protein is Diaminopimelate epimerase of Rickettsia prowazekii (strain Madrid E).